We begin with the raw amino-acid sequence, 329 residues long: GTP 3',8-cyclase (329 aa).

Positions 8-234 (AFARKFYYLR…QLRQRSDGPA (227 aa)) constitute a Radical SAM core domain. R17 is a GTP binding site. Positions 24 and 28 each coordinate [4Fe-4S] cluster. S-adenosyl-L-methionine is bound at residue Y30. A [4Fe-4S] cluster-binding site is contributed by C31. R68 is a binding site for GTP. G72 lines the S-adenosyl-L-methionine pocket. Residue T99 participates in GTP binding. S123 provides a ligand contact to S-adenosyl-L-methionine. Residue K160 participates in GTP binding. M194 contributes to the S-adenosyl-L-methionine binding site. The [4Fe-4S] cluster site is built by C257 and C260. Residue 262–264 (RLR) coordinates GTP. [4Fe-4S] cluster is bound at residue C274.

This sequence belongs to the radical SAM superfamily. MoaA family. In terms of assembly, monomer and homodimer. It depends on [4Fe-4S] cluster as a cofactor.

The catalysed reaction is GTP + AH2 + S-adenosyl-L-methionine = (8S)-3',8-cyclo-7,8-dihydroguanosine 5'-triphosphate + 5'-deoxyadenosine + L-methionine + A + H(+). Its pathway is cofactor biosynthesis; molybdopterin biosynthesis. Functionally, catalyzes the cyclization of GTP to (8S)-3',8-cyclo-7,8-dihydroguanosine 5'-triphosphate. This Salmonella newport (strain SL254) protein is GTP 3',8-cyclase.